The following is a 900-amino-acid chain: Trehalose-phosphatase (900 aa).

Disordered regions lie at residues 76–109 and 874–900; these read SRLF…EEDP and VKHS…SYKN. Over residues 82–108 the composition is skewed to basic and acidic residues; that stretch reads KNRDKSENGEKGENDLHAKEEREKEED.

The protein in the C-terminal section; belongs to the trehalose phosphatase family. It in the N-terminal section; belongs to the glycosyltransferase 20 family. Requires Mg(2+) as cofactor.

The catalysed reaction is alpha,alpha-trehalose 6-phosphate + H2O = alpha,alpha-trehalose + phosphate. The protein operates within carbohydrate biosynthesis. In terms of biological role, phosphatase catalytic subunit of the trehalose synthase complex that catalyzes the production of trehalose from glucose-6-phosphate and UDP-alpha-D-glucose in a two step process. The chain is Trehalose-phosphatase from Zygosaccharomyces rouxii.